The chain runs to 565 residues: DNA-dependent metalloprotease SPRTN (565 aa).

A SprT-like domain is found at 23-130; it reads RALFLEFNDT…RTGANISVYH (108 aa). His-88 is a binding site for Zn(2+). Glu-89 is an active-site residue. 2 residues coordinate Zn(2+): His-92 and His-107. Residues 191–219 form a disordered region; sequence EPENYPQKRKRKNDPTISEVNSSSHVKGK. Residues 205 to 215 show a composition bias toward polar residues; that stretch reads PTISEVNSSSH. The SHP-box motif lies at 231-239; that stretch reads FSGTGYKLF. Residues 288-295 carry the PIP-box motif; it reads STPAQSIL. Positions 349 to 389 are disordered; that stretch reads TLPSPSIQSTSQKPQKDISFGFTLPSQSFPSTSPGSNSENK. Polar residues-rich tracts occupy residues 351-361 and 372-386; these read PSPSIQSTSQK and LPSQ…GSNS. The UBZ4-type 1 zinc finger occupies 436 to 463; it reads KVSCPVCGTEVLECKINDHLDTCTSSGP. Zn(2+)-binding residues include Cys-439, Cys-442, His-454, and Cys-458. The Nuclear localization signal motif lies at 476–499; sequence QSFPSTSQGSNSAIKEPLYKKLQI. The UBZ4-type 2 zinc-finger motif lies at 537 to 564; that stretch reads KVCCPVCGTDVLQDKINDHLDTCLQNCN. Zn(2+)-binding residues include Cys-540, Cys-543, His-555, and Cys-559.

Belongs to the Spartan family. As to quaternary structure, homodimer. Zn(2+) serves as cofactor. Autocatalytically cleaved in response to double-stranded DNA-binding: autocatalytic cleavage takes place in trans and leads to inactivation.

The protein localises to the nucleus. The protein resides in the chromosome. Its activity is regulated as follows. DNA-binding activates the protease activity: single-stranded DNA-binding specifically activates ability to cleave covalent DNA-protein cross-links (DPCs). In contrast, double-stranded DNA-binding specifically activates autocatalytic cleavage, and subsequent inactivation. In terms of biological role, DNA-dependent metalloendopeptidase that mediates the proteolytic cleavage of covalent DNA-protein cross-links (DPCs) during DNA synthesis, thereby playing a key role in maintaining genomic integrity. DPCs are highly toxic DNA lesions that interfere with essential chromatin transactions, such as replication and transcription, and which are induced by reactive agents, such as UV light or formaldehyde. Associates with the DNA replication machinery and specifically removes DPCs during DNA synthesis. Catalyzes proteolytic cleavage of the hmces DNA-protein cross-link following unfolding by the brip1/fancj helicase. Acts as a pleiotropic protease for DNA-binding proteins cross-linked with DNA, such as top1, top2a, histones H3 and H4. Mediates degradation of DPCs that are not ubiquitinated, while it is not able to degrade ubiquitinated DPCs. SPRTN activation requires polymerase collision with DPCs followed by helicase bypass of DPCs. May also act as a 'reader' of ubiquitinated pcna: facilitates chromatin association of rad18 and is required for efficient pcna monoubiquitination, promoting a feed-forward loop to enhance pcna ubiquitination and translesion DNA synthesis. Acts as a regulator of translesion DNA synthesis by recruiting vcp/p97 to sites of DNA damage. In Xenopus laevis (African clawed frog), this protein is DNA-dependent metalloprotease SPRTN.